The following is a 360-amino-acid chain: GTPase Obg (360 aa).

An Obg domain is found at 1-156; that stretch reads MFVDSVEIII…KCVRLELKLI (156 aa). One can recognise an OBG-type G domain in the interval 157-360; that stretch reads ADIGLVGFPN…LKFVLLEALP (204 aa). GTP is bound by residues 163-170, 188-192, 210-213, 279-282, and 341-343; these read GFPNAGKS, FTTLV, DIPG, NKCD, and SAV. Residues Ser170 and Thr190 each coordinate Mg(2+).

It belongs to the TRAFAC class OBG-HflX-like GTPase superfamily. OBG GTPase family. As to quaternary structure, monomer. Mg(2+) is required as a cofactor.

It localises to the cytoplasm. In terms of biological role, an essential GTPase which binds GTP, GDP and possibly (p)ppGpp with moderate affinity, with high nucleotide exchange rates and a fairly low GTP hydrolysis rate. Plays a role in control of the cell cycle, stress response, ribosome biogenesis and in those bacteria that undergo differentiation, in morphogenesis control. The chain is GTPase Obg from Helicobacter pylori (strain HPAG1).